Consider the following 66-residue polypeptide: Translational regulator CsrA (66 aa).

Belongs to the CsrA/RsmA family. In terms of assembly, homodimer; the beta-strands of each monomer intercalate to form a hydrophobic core, while the alpha-helices form wings that extend away from the core.

The protein resides in the cytoplasm. Functionally, a key translational regulator that binds mRNA to regulate translation initiation and/or mRNA stability. Mediates global changes in gene expression, shifting from rapid growth to stress survival by linking envelope stress, the stringent response and the catabolite repression systems. Usually binds in the 5'-UTR; binding at or near the Shine-Dalgarno sequence prevents ribosome-binding, repressing translation, binding elsewhere in the 5'-UTR can activate translation and/or stabilize the mRNA. Its function is antagonized by small RNA(s). The chain is Translational regulator CsrA from Alkalilimnicola ehrlichii (strain ATCC BAA-1101 / DSM 17681 / MLHE-1).